Consider the following 623-residue polypeptide: Chaperone protein DnaK (623 aa).

Position 197 is a phosphothreonine; by autocatalysis (T197). A compositionally biased stretch (basic and acidic residues) spans 595–615 (AENMYKKDEPNTANDKKKKDD). The tract at residues 595 to 623 (AENMYKKDEPNTANDKKKKDDDVIDAEVE) is disordered.

The protein belongs to the heat shock protein 70 family.

Functionally, acts as a chaperone. The protein is Chaperone protein DnaK of Campylobacter jejuni subsp. jejuni serotype O:6 (strain 81116 / NCTC 11828).